We begin with the raw amino-acid sequence, 250 residues long: Triosephosphate isomerase (250 aa).

Position 9–11 (9–11) interacts with substrate; the sequence is NWK. His-96 (electrophile) is an active-site residue. The active-site Proton acceptor is Glu-168. Residues Gly-174, Ser-216, and 237–238 contribute to the substrate site; that span reads GG.

It belongs to the triosephosphate isomerase family. In terms of assembly, homodimer.

It localises to the cytoplasm. It carries out the reaction D-glyceraldehyde 3-phosphate = dihydroxyacetone phosphate. Its pathway is carbohydrate biosynthesis; gluconeogenesis. It participates in carbohydrate degradation; glycolysis; D-glyceraldehyde 3-phosphate from glycerone phosphate: step 1/1. Its function is as follows. Involved in the gluconeogenesis. Catalyzes stereospecifically the conversion of dihydroxyacetone phosphate (DHAP) to D-glyceraldehyde-3-phosphate (G3P). This is Triosephosphate isomerase from Leptospira borgpetersenii serovar Hardjo-bovis (strain JB197).